The primary structure comprises 695 residues: FMR1-interacting protein NUFIP2 (695 aa).

The tract at residues 1-100 is disordered; sequence MEEKPGQPQP…KTGYGELNGN (100 aa). 2 stretches are compositionally biased toward basic residues: residues 11 to 23 and 30 to 53; these read QHHH…HHHP and PHHH…HHQQ. Residue Lys78 forms a Glycyl lysine isopeptide (Lys-Gly) (interchain with G-Cter in SUMO2) linkage. At Thr87 the chain carries Phosphothreonine. Lys109 is covalently cross-linked (Glycyl lysine isopeptide (Lys-Gly) (interchain with G-Cter in SUMO2)). Ser112 and Ser113 each carry phosphoserine. Residues Lys136, Lys146, Lys157, and Lys171 each participate in a glycyl lysine isopeptide (Lys-Gly) (interchain with G-Cter in SUMO2) cross-link. Disordered regions lie at residues 155 to 189, 204 to 234, 261 to 341, and 369 to 402; these read IQKN…IPNG, GKGA…AKGC, FKPD…KPPP, and TIQN…SQVP. The segment covering 159-182 has biased composition (basic and acidic residues); it reads SMDKKNGKSYENKSGENQSVDKSD. Ser212 and Ser214 each carry phosphoserine. Tyr218 is modified (phosphotyrosine). Phosphothreonine occurs at positions 219 and 220. The span at 221–230 shows a compositional bias: basic residues; that stretch reads PKKRKARRNS. A compositionally biased stretch (basic and acidic residues) spans 261–275; that stretch reads FKPDYSEQKGNRVDG. Residues Lys262 and Lys281 each participate in a glycyl lysine isopeptide (Lys-Gly) (interchain with G-Cter in SUMO2) cross-link. Arg291 is subject to Omega-N-methylarginine. Lys293 participates in a covalent cross-link: Glycyl lysine isopeptide (Lys-Gly) (interchain with G-Cter in SUMO2). Ser304 bears the Phosphoserine mark. Lys307 is covalently cross-linked (Glycyl lysine isopeptide (Lys-Gly) (interchain with G-Cter in SUMO2)). The span at 373-396 shows a compositional bias: low complexity; that stretch reads SSVSPTSSSSSSSSTGETQTQSSS. Ser376 carries the post-translational modification Phosphoserine. Phosphothreonine is present on Thr571. Residues Ser572, Ser592, Ser608, and Ser629 each carry the phosphoserine modification. Thr633 is subject to Phosphothreonine. Residues Ser637, Ser652, Ser655, and Ser692 each carry the phosphoserine modification.

In terms of assembly, interacts with FMR1 (via N-terminus). Interacts with DDX6.

It localises to the nucleus. It is found in the cytoplasm. The protein resides in the stress granule. Binds RNA. This is FMR1-interacting protein NUFIP2 from Homo sapiens (Human).